Reading from the N-terminus, the 528-residue chain is Glutamyl-tRNA(Gln) amidotransferase subunit B, mitochondrial (528 aa).

This sequence belongs to the GatB/GatE family. GatB subfamily. As to quaternary structure, subunit of the heterotrimeric GatFAB amidotransferase (AdT) complex, composed of A, B and F subunits.

The protein resides in the mitochondrion. The catalysed reaction is L-glutamyl-tRNA(Gln) + L-glutamine + ATP + H2O = L-glutaminyl-tRNA(Gln) + L-glutamate + ADP + phosphate + H(+). Its function is as follows. Allows the formation of correctly charged Gln-tRNA(Gln) through the transamidation of misacylated Glu-tRNA(Gln) in the mitochondria. The reaction takes place in the presence of glutamine and ATP through an activated gamma-phospho-Glu-tRNA(Gln). In Clavispora lusitaniae (strain ATCC 42720) (Yeast), this protein is Glutamyl-tRNA(Gln) amidotransferase subunit B, mitochondrial.